The sequence spans 101 residues: Small ribosomal subunit protein uS14 (101 aa).

It belongs to the universal ribosomal protein uS14 family. Part of the 30S ribosomal subunit. Contacts proteins S3 and S10.

Functionally, binds 16S rRNA, required for the assembly of 30S particles and may also be responsible for determining the conformation of the 16S rRNA at the A site. The protein is Small ribosomal subunit protein uS14 of Haemophilus influenzae (strain PittGG).